We begin with the raw amino-acid sequence, 345 residues long: Protein RecA (345 aa).

Glycine 65–threonine 72 is an ATP binding site.

It belongs to the RecA family.

The protein localises to the cytoplasm. Can catalyze the hydrolysis of ATP in the presence of single-stranded DNA, the ATP-dependent uptake of single-stranded DNA by duplex DNA, and the ATP-dependent hybridization of homologous single-stranded DNAs. It interacts with LexA causing its activation and leading to its autocatalytic cleavage. The polypeptide is Protein RecA (Campylobacter fetus subsp. fetus (strain 82-40)).